The sequence spans 310 residues: Acetyl-coenzyme A carboxylase carboxyl transferase subunit alpha (310 aa).

In terms of domain architecture, CoA carboxyltransferase C-terminal spans 36-286 (NLEKEITKTY…GEYILKQLDE (251 aa)).

Belongs to the AccA family. Acetyl-CoA carboxylase is a heterohexamer composed of biotin carboxyl carrier protein (AccB), biotin carboxylase (AccC) and two subunits each of ACCase subunit alpha (AccA) and ACCase subunit beta (AccD).

The protein localises to the cytoplasm. It catalyses the reaction N(6)-carboxybiotinyl-L-lysyl-[protein] + acetyl-CoA = N(6)-biotinyl-L-lysyl-[protein] + malonyl-CoA. It participates in lipid metabolism; malonyl-CoA biosynthesis; malonyl-CoA from acetyl-CoA: step 1/1. Its function is as follows. Component of the acetyl coenzyme A carboxylase (ACC) complex. First, biotin carboxylase catalyzes the carboxylation of biotin on its carrier protein (BCCP) and then the CO(2) group is transferred by the carboxyltransferase to acetyl-CoA to form malonyl-CoA. This is Acetyl-coenzyme A carboxylase carboxyl transferase subunit alpha from Campylobacter fetus subsp. fetus (strain 82-40).